The chain runs to 146 residues: Putative pre-16S rRNA nuclease (146 aa).

It belongs to the YqgF nuclease family.

It localises to the cytoplasm. In terms of biological role, could be a nuclease involved in processing of the 5'-end of pre-16S rRNA. The sequence is that of Putative pre-16S rRNA nuclease from Pediococcus pentosaceus (strain ATCC 25745 / CCUG 21536 / LMG 10740 / 183-1w).